A 307-amino-acid polypeptide reads, in one-letter code: Protoheme IX farnesyltransferase (307 aa).

9 helical membrane-spanning segments follow: residues 28–48, 50–70, 100–120, 122–142, 149–169, 176–196, 218–238, 243–263, and 282–302; these read VTQL…PGMV, WPVL…AFAI, ILLF…VFAN, LTMW…TLLL, NIVI…AAVA, AWIL…ALAL, FTLL…ILPF, SGYL…VHAW, and IVYL…KFGP.

The protein belongs to the UbiA prenyltransferase family. Protoheme IX farnesyltransferase subfamily.

The protein resides in the cell inner membrane. It carries out the reaction heme b + (2E,6E)-farnesyl diphosphate + H2O = Fe(II)-heme o + diphosphate. It functions in the pathway porphyrin-containing compound metabolism; heme O biosynthesis; heme O from protoheme: step 1/1. In terms of biological role, converts heme B (protoheme IX) to heme O by substitution of the vinyl group on carbon 2 of heme B porphyrin ring with a hydroxyethyl farnesyl side group. The sequence is that of Protoheme IX farnesyltransferase from Ralstonia nicotianae (strain ATCC BAA-1114 / GMI1000) (Ralstonia solanacearum).